The chain runs to 83 residues: MKTLLLTLVVVTIVCLDLGYTLKCHNTQLPFIYKTCPEGKNLCFKATLKKFPLKFPVKRGCADNCPKNSALLKYVCCSTEKCN.

A signal peptide spans 1–21 (MKTLLLTLVVVTIVCLDLGYT). 4 disulfides stabilise this stretch: Cys-24/Cys-43, Cys-36/Cys-61, Cys-65/Cys-76, and Cys-77/Cys-82.

The protein belongs to the three-finger toxin family. Short-chain subfamily. Orphan group XV sub-subfamily. Expressed by the venom gland.

It localises to the secreted. It is found in the target cell membrane. In terms of biological role, has low cytotoxic activity. This is Cardiotoxin 7a from Naja atra (Chinese cobra).